The chain runs to 223 residues: Leucyl/phenylalanyl-tRNA--protein transferase (223 aa).

Belongs to the L/F-transferase family.

The protein resides in the cytoplasm. It carries out the reaction N-terminal L-lysyl-[protein] + L-leucyl-tRNA(Leu) = N-terminal L-leucyl-L-lysyl-[protein] + tRNA(Leu) + H(+). The enzyme catalyses N-terminal L-arginyl-[protein] + L-leucyl-tRNA(Leu) = N-terminal L-leucyl-L-arginyl-[protein] + tRNA(Leu) + H(+). The catalysed reaction is L-phenylalanyl-tRNA(Phe) + an N-terminal L-alpha-aminoacyl-[protein] = an N-terminal L-phenylalanyl-L-alpha-aminoacyl-[protein] + tRNA(Phe). In terms of biological role, functions in the N-end rule pathway of protein degradation where it conjugates Leu, Phe and, less efficiently, Met from aminoacyl-tRNAs to the N-termini of proteins containing an N-terminal arginine or lysine. The chain is Leucyl/phenylalanyl-tRNA--protein transferase from Dinoroseobacter shibae (strain DSM 16493 / NCIMB 14021 / DFL 12).